We begin with the raw amino-acid sequence, 908 residues long: Protein translocase subunit SecA (908 aa).

Residues glutamine 90, 108 to 112 (GEGKT), and aspartate 503 each bind ATP. Over residues 846-864 (AAAAEAPVAPAPQPAAAAP) the composition is skewed to low complexity. Residues 846-884 (AAAAEAPVAPAPQPAAAAPQPTPELVGAEAGEPDPAAWG) are disordered. The Zn(2+) site is built by cysteine 892, cysteine 894, cysteine 903, and histidine 904.

Belongs to the SecA family. In terms of assembly, monomer and homodimer. Part of the essential Sec protein translocation apparatus which comprises SecA, SecYEG and auxiliary proteins SecDF-YajC and YidC. Zn(2+) serves as cofactor.

Its subcellular location is the cell inner membrane. The protein localises to the cytoplasm. The catalysed reaction is ATP + H2O + cellular proteinSide 1 = ADP + phosphate + cellular proteinSide 2.. In terms of biological role, part of the Sec protein translocase complex. Interacts with the SecYEG preprotein conducting channel. Has a central role in coupling the hydrolysis of ATP to the transfer of proteins into and across the cell membrane, serving both as a receptor for the preprotein-SecB complex and as an ATP-driven molecular motor driving the stepwise translocation of polypeptide chains across the membrane. This chain is Protein translocase subunit SecA, found in Cereibacter sphaeroides (strain ATCC 17029 / ATH 2.4.9) (Rhodobacter sphaeroides).